We begin with the raw amino-acid sequence, 155 residues long: Large ribosomal subunit protein uL11 (155 aa).

Belongs to the universal ribosomal protein uL11 family. Part of the ribosomal stalk of the 50S ribosomal subunit. Interacts with L10 and the large rRNA to form the base of the stalk. L10 forms an elongated spine to which L12 dimers bind in a sequential fashion forming a multimeric L10(L12)X complex. In terms of processing, one or more lysine residues are methylated.

In terms of biological role, forms part of the ribosomal stalk which helps the ribosome interact with GTP-bound translation factors. This is Large ribosomal subunit protein uL11 from Malacoplasma penetrans (strain HF-2) (Mycoplasma penetrans).